The primary structure comprises 920 residues: KIN14B-interacting protein At4g14310 (920 aa).

The span at 1-10 shows a compositional bias: basic residues; the sequence is MSASTNRRRL. Disordered regions lie at residues 1–199 and 309–375; these read MSAS…EKST and IDGP…EKPS. Over residues 35 to 54 the composition is skewed to polar residues; that stretch reads PISSKNSNPALQKSLSSKEN. A compositionally biased stretch (low complexity) spans 90–105; the sequence is TRSTSSGLRGRSSSPS. A compositionally biased stretch (basic and acidic residues) spans 112-135; the sequence is SDLRKRNESRVIGEKGESGQDKKS. Polar residues-rich tracts occupy residues 137-147 and 166-184; these read LKSSGFKQGTS and CPVN…NSIS. Residues 327-337 show a composition bias toward basic and acidic residues; it reads LNKEELEDRLL. Over residues 345–355 the composition is skewed to polar residues; the sequence is SRTQSKTSSHV. A compositionally biased stretch (basic and acidic residues) spans 357 to 374; sequence KGHDSVESNKAVNAEEKP. A coiled-coil region spans residues 435 to 463; the sequence is TEILRANEALEEIDDEENREEMELEEIDD.

As to quaternary structure, interacts with KIN14B, CDKA-1, CKS1 and CKS2.

It localises to the cytoplasm. Functionally, might be involved in division plane determination. The chain is KIN14B-interacting protein At4g14310 from Arabidopsis thaliana (Mouse-ear cress).